The sequence spans 100 residues: Small ribosomal subunit protein bS20 (100 aa).

Over residues 1 to 18 the composition is skewed to basic and acidic residues; it reads MPNKKSAEKRVRQSEQRR. The disordered stretch occupies residues 1–26; sequence MPNKKSAEKRVRQSEQRRQKNRGYQK.

Belongs to the bacterial ribosomal protein bS20 family.

Binds directly to 16S ribosomal RNA. This chain is Small ribosomal subunit protein bS20, found in Petrotoga mobilis (strain DSM 10674 / SJ95).